Consider the following 616-residue polypeptide: Electron transfer flavoprotein-ubiquinone oxidoreductase, mitochondrial (616 aa).

The N-terminal 32 residues, 1–32 (MLVRLTKLSCPAYHWFHALKIKKCLPLCAPRC), are a transit peptide targeting the mitochondrion. 70–84 (VVIVGAGPAGLSAAI) contacts FAD. The residue at position 95 (lysine 95) is an N6-acetyllysine. Residues 108-129 (IGAHTLSGACLDPAAFKELFPD) lie within the membrane without spanning it. N6-acetyllysine occurs at positions 131 and 222. A ubiquinone-binding residues include glycine 304 and glycine 305. Lysine 356 and lysine 415 each carry N6-acetyllysine. An intramembrane segment occupies 427-446 (TGLHVTEYEDNLKQSWVWKE). The residue at position 550 (serine 550) is a Phosphoserine. Residues cysteine 560, cysteine 585, cysteine 588, and cysteine 591 each contribute to the [4Fe-4S] cluster site. In terms of domain architecture, 4Fe-4S ferredoxin-type spans 576–605 (FRLQINAQNCVHCKTCDIKDPSQNINWVVP).

It belongs to the ETF-QO/FixC family. In terms of assembly, monomer. [4Fe-4S] cluster is required as a cofactor. Requires FAD as cofactor. Acetylation of Lys-95 and Lys-222 is observed in liver mitochondria from fasted mice but not from fed mice.

The protein resides in the mitochondrion inner membrane. The enzyme catalyses a ubiquinone + reduced [electron-transfer flavoprotein] = a ubiquinol + oxidized [electron-transfer flavoprotein] + H(+). Accepts electrons from ETF and reduces ubiquinone. The chain is Electron transfer flavoprotein-ubiquinone oxidoreductase, mitochondrial (Etfdh) from Mus musculus (Mouse).